Reading from the N-terminus, the 156-residue chain is Arginine repressor (156 aa).

This sequence belongs to the ArgR family.

It is found in the cytoplasm. It participates in amino-acid biosynthesis; L-arginine biosynthesis [regulation]. In terms of biological role, regulates arginine biosynthesis genes. The chain is Arginine repressor from Edwardsiella ictaluri (strain 93-146).